Here is a 145-residue protein sequence, read N- to C-terminus: Transcriptional regulator MraZ (145 aa).

SpoVT-AbrB domains follow at residues 5 to 49 and 78 to 121; these read TYNH…LESE and TYKI…AKEV.

This sequence belongs to the MraZ family. Forms oligomers.

Its subcellular location is the cytoplasm. It is found in the nucleoid. In Ureaplasma parvum serovar 3 (strain ATCC 27815 / 27 / NCTC 11736), this protein is Transcriptional regulator MraZ.